A 64-amino-acid polypeptide reads, in one-letter code: Large ribosomal subunit protein bL32 (64 aa).

Basic residues predominate over residues 1-10 (MAVPKRKTTP). Residues 1–22 (MAVPKRKTTPSKRDMRRANHDK) are disordered. A compositionally biased stretch (basic and acidic residues) spans 11-22 (SKRDMRRANHDK).

It belongs to the bacterial ribosomal protein bL32 family.

The protein is Large ribosomal subunit protein bL32 of Sorangium cellulosum (strain So ce56) (Polyangium cellulosum (strain So ce56)).